Here is a 426-residue protein sequence, read N- to C-terminus: MMDTAIATIRAREILDSRGRPTVEAEVELECGIVGLAQVPSGASTGSFEAHELRDGDPKRYGGKGVLSAVENIETRILSALVDLNALDQTVIDQCLLELDGSENKSNLGANAILAVSLATAKAAAEYLGQPLYRYLGGPLANVLPVPMMNVINGGAHAANNIDFQEFMIMPIGAPSFREGLRWGAEVFAALSKVLADKGLLTGVGDEGGFAPNLDSNQAALDILLQAIETAGYRPGTDVALALDVAANEFYEDGKYVFDNTSRTASELIRYYDQLVSTYPIISIEDGLQEEDWDNWALLTETLGSRIQLVGDDLFVTNPKRLQRGIDNGVANAILIKLNQIGSLTETLQTIDLATRKGYRAVISHRSGETEDTTIADLAVATRAGQIKTGSLCRSERVAKYNRLLRIEAELGDQAVYAPKVGLGPR.

Gln165 contributes to the (2R)-2-phosphoglycerate binding site. Glu207 acts as the Proton donor in catalysis. Mg(2+) is bound by residues Asp244, Glu285, and Asp312. 4 residues coordinate (2R)-2-phosphoglycerate: Lys337, Arg366, Ser367, and Lys388. Lys337 functions as the Proton acceptor in the catalytic mechanism.

The protein belongs to the enolase family. The cofactor is Mg(2+).

It is found in the cytoplasm. Its subcellular location is the secreted. It localises to the cell surface. It carries out the reaction (2R)-2-phosphoglycerate = phosphoenolpyruvate + H2O. The protein operates within carbohydrate degradation; glycolysis; pyruvate from D-glyceraldehyde 3-phosphate: step 4/5. Functionally, catalyzes the reversible conversion of 2-phosphoglycerate (2-PG) into phosphoenolpyruvate (PEP). It is essential for the degradation of carbohydrates via glycolysis. The chain is Enolase from Thermosynechococcus vestitus (strain NIES-2133 / IAM M-273 / BP-1).